Here is a 348-residue protein sequence, read N- to C-terminus: Aspartate carbamoyltransferase catalytic subunit (348 aa).

2 residues coordinate carbamoyl phosphate: R57 and T58. L-aspartate is bound at residue K86. Carbamoyl phosphate-binding residues include R107, H135, and Q138. Residues R172 and R234 each coordinate L-aspartate. Carbamoyl phosphate is bound by residues L274 and P275.

The protein belongs to the aspartate/ornithine carbamoyltransferase superfamily. ATCase family. Heterododecamer (2C3:3R2) of six catalytic PyrB chains organized as two trimers (C3), and six regulatory PyrI chains organized as three dimers (R2).

The enzyme catalyses carbamoyl phosphate + L-aspartate = N-carbamoyl-L-aspartate + phosphate + H(+). It participates in pyrimidine metabolism; UMP biosynthesis via de novo pathway; (S)-dihydroorotate from bicarbonate: step 2/3. Its function is as follows. Catalyzes the condensation of carbamoyl phosphate and aspartate to form carbamoyl aspartate and inorganic phosphate, the committed step in the de novo pyrimidine nucleotide biosynthesis pathway. In Dichelobacter nodosus (strain VCS1703A), this protein is Aspartate carbamoyltransferase catalytic subunit.